The primary structure comprises 87 residues: Acyl-CoA-binding protein (87 aa).

Serine 2 is subject to N-acetylserine. The ACB domain occupies 2–87 (SQAEFDKAAE…VEELKKKYGI (86 aa)). At lysine 8 the chain carries N6-acetyllysine; alternate. Position 8 is an N6-succinyllysine; alternate (lysine 8). Position 14 (lysine 14) interacts with an acyl-CoA. Lysine 17 is modified (N6-succinyllysine). An N6-acetyllysine modification is found at lysine 19. Phosphotyrosine is present on tyrosine 29. An acyl-CoA contacts are provided by residues 29–33 (YSHYK), lysine 51, lysine 55, and tyrosine 74. An N6-acetyllysine modification is found at lysine 51. The residue at position 55 (lysine 55) is an N6-acetyllysine; alternate. An N6-succinyllysine; alternate modification is found at lysine 55. Lysine 55 is modified (N6-(2-hydroxyisobutyryl)lysine; alternate). Lysine 55 is modified (N6-malonyllysine; alternate). Lysine 77 carries the N6-acetyllysine; alternate modification. Residue lysine 77 is modified to N6-succinyllysine; alternate.

Belongs to the ACBP family. Monomer.

The protein resides in the endoplasmic reticulum. It localises to the golgi apparatus. Its function is as follows. Binds medium- and long-chain acyl-CoA esters with very high affinity and may function as an intracellular carrier of acyl-CoA esters. It is also able to displace diazepam from the benzodiazepine (BZD) recognition site located on the GABA type A receptor. It is therefore possible that this protein also acts as a neuropeptide to modulate the action of the GABA receptor. This chain is Acyl-CoA-binding protein (DBI), found in Bos taurus (Bovine).